A 1420-amino-acid polypeptide reads, in one-letter code: DNA-directed RNA polymerase subunit beta' (1420 aa).

Residues C72, C74, C87, and C90 each coordinate Zn(2+). Mg(2+) is bound by residues D462, D464, and D466. C816, C896, C903, and C906 together coordinate Zn(2+).

This sequence belongs to the RNA polymerase beta' chain family. The RNAP catalytic core consists of 2 alpha, 1 beta, 1 beta' and 1 omega subunit. When a sigma factor is associated with the core the holoenzyme is formed, which can initiate transcription. It depends on Mg(2+) as a cofactor. Zn(2+) serves as cofactor.

The catalysed reaction is RNA(n) + a ribonucleoside 5'-triphosphate = RNA(n+1) + diphosphate. Its function is as follows. DNA-dependent RNA polymerase catalyzes the transcription of DNA into RNA using the four ribonucleoside triphosphates as substrates. This chain is DNA-directed RNA polymerase subunit beta', found in Blochmanniella floridana.